The following is a 93-amino-acid chain: Bombyxin-related peptide B (93 aa).

The signal sequence occupies residues 1-21 (MKFVLVLVSLALLVSLASVQG). Intrachain disulfides connect C25–C80, C37–C93, and C79–C84. The propeptide at 47 to 71 (SGAMGAAAMYGTRGWRWAAMGGNRG) is c peptide like.

It belongs to the insulin family. In terms of assembly, heterodimer of a B chain and an A chain linked by two disulfide bonds. As to expression, located in 4 pairs of medial neurosecretory cells in the brain.

The protein resides in the secreted. The protein is Bombyxin-related peptide B of Agrius convolvuli (Convolvulus hawk-moth).